The primary structure comprises 639 residues: Tubulin--tyrosine ligase-like protein 12 (639 aa).

The 345-residue stretch at 295-639 (PQGHVFRVHC…TDNCHVTRII (345 aa)) folds into the TTL domain. ATP contacts are provided by residues 445 to 448 (SKYI), K463, and D465.

This sequence belongs to the tubulin--tyrosine ligase family. In terms of assembly, interacts with MAVS; the interaction prevents MAVS binding to TBK1 and IKBKE. Interacts (via N-terminus) with TBK1 (via protein kinase domain). Interacts (via TTL domain) with IKBKE (via protein kinase domain). Interacts with tubulin alpha. Interacts with histone H3 and histone H4 (when trimethylated at 'Lys-20' (H4K20me3)). Interacts with CBX3. Widely expressed with highest levels in brain, kidney, liver, lung, muscle and testis.

It localises to the cytoplasm. It is found in the midbody. The protein localises to the cytoskeleton. The protein resides in the microtubule organizing center. Its subcellular location is the centrosome. It localises to the spindle. It is found in the nucleus. Its function is as follows. Negatively regulates post-translational modifications of tubulin, including detyrosination of the C-terminus and polyglutamylation of glutamate residues. Also, indirectly promotes histone H4 trimethylation at 'Lys-20' (H4K20me3). Probably by controlling tubulin and/or histone H4 post-translational modifications, plays a role in mitosis and in maintaining chromosome number stability. During RNA virus-mediated infection, acts as a negative regulator of the RIG-I pathway by preventing MAVS binding to TBK1 and IKBKE. The sequence is that of Tubulin--tyrosine ligase-like protein 12 from Mus musculus (Mouse).